Consider the following 188-residue polypeptide: Large ribosomal subunit protein bL35m (188 aa).

This sequence belongs to the bacterial ribosomal protein bL35 family.

The protein localises to the mitochondrion. The polypeptide is Large ribosomal subunit protein bL35m (MRPL35) (Bos taurus (Bovine)).